An 801-amino-acid polypeptide reads, in one-letter code: Protein SDA1 homolog (801 aa).

4 disordered regions span residues 1–40, 495–517, 536–647, and 739–801; these read MGKV…ASRF, RKDR…FARP, GEQG…SKNS, and DYKF…RKPQ. Over residues 24–40 the composition is skewed to polar residues; that stretch reads KSNAPTEGSNSGKASRF. Acidic residues-rich tracts occupy residues 544–568 and 583–633; these read DGTD…DADE and NDAE…EASE. Basic residues-rich tracts occupy residues 770–779 and 787–801; these read NKIRGRNRQR and SLRH…RKPQ.

The protein belongs to the SDA1 family.

It localises to the nucleus. Functionally, required for 60S pre-ribosomal subunits export to the cytoplasm. Required for normal somatic gonad development and for regulation of germline development and proliferation. This Caenorhabditis elegans protein is Protein SDA1 homolog (pro-3).